The sequence spans 88 residues: Phosphocarrier protein HPr (88 aa).

An HPr domain is found at 1–88 (MEQASFVVID…EVLKKEGLAE (88 aa)). Catalysis depends on His15, which acts as the Pros-phosphohistidine intermediate. Ser46 bears the Phosphoserine; by HPrK/P mark.

Belongs to the HPr family.

It localises to the cytoplasm. Phosphorylation on Ser-46 inhibits the phosphoryl transfer from enzyme I to HPr. General (non sugar-specific) component of the phosphoenolpyruvate-dependent sugar phosphotransferase system (sugar PTS). This major carbohydrate active-transport system catalyzes the phosphorylation of incoming sugar substrates concomitantly with their translocation across the cell membrane. The phosphoryl group from phosphoenolpyruvate (PEP) is transferred to the phosphoryl carrier protein HPr by enzyme I. Phospho-HPr then transfers it to the PTS EIIA domain. In terms of biological role, P-Ser-HPr interacts with the catabolite control protein A (CcpA), forming a complex that binds to DNA at the catabolite response elements cre, operator sites preceding a large number of catabolite-regulated genes. Thus, P-Ser-HPr is a corepressor in carbon catabolite repression (CCR), a mechanism that allows bacteria to coordinate and optimize the utilization of available carbon sources. P-Ser-HPr also plays a role in inducer exclusion, in which it probably interacts with several non-PTS permeases and inhibits their transport activity. The sequence is that of Phosphocarrier protein HPr (ptsH) from Listeria monocytogenes serovar 1/2a (strain ATCC BAA-679 / EGD-e).